We begin with the raw amino-acid sequence, 302 residues long: MTEPQEQLLQLQKDNRDGRLRKQELEELVRGLEAESESLTGRLEELRERERSLQRRRSQASRAIRGEACEAARERAERARGLLEAAEQHRQDLEQHNRKLQEQWEELSSQLFYYGGEQLSQQRAEQQLGNQLVALQKHLELAEAKFSMQAEDLRQGAQRTEEAWASFQEQSGVLQELQGKVMEAAAALEATRGGSEPWNSEPRPVQDCAGSLMEEVARADCEKRLFGGTGAGSLRLWALSALQTLLLLPLGFLVLPLIYVVLAKPDAVGPGLQSLGSDAVFRRLRYTLSPLLELRARGLLPA.

Residues 5-147 (QEQLLQLQKD…HLELAEAKFS (143 aa)) are a coiled coil. The tract at residues 39 to 66 (LTGRLEELRERERSLQRRRSQASRAIRG) is disordered. Positions 42–53 (RLEELRERERSL) are enriched in basic and acidic residues. The helical transmembrane segment at 242–262 (LQTLLLLPLGFLVLPLIYVVL) threads the bilayer.

This sequence belongs to the TMEM191 family.

It is found in the membrane. This is Transmembrane protein 191 from Mus musculus (Mouse).